The chain runs to 943 residues: Protein translocase subunit SecA (943 aa).

ATP contacts are provided by residues Q90, 108-112 (GEGKT), and D509. The interval 534–576 (KPDNEHKPPIPQQRSSKAGGGFASKSESISNKNSKSSGASLFP) is disordered. Over residues 556–570 (ASKSESISNKNSKSS) the composition is skewed to low complexity.

The protein belongs to the SecA family. As to quaternary structure, monomer and homodimer. Part of the essential Sec protein translocation apparatus which comprises SecA, SecYEG and auxiliary proteins SecDF. Other proteins may also be involved.

It localises to the cell inner membrane. Its subcellular location is the cellular thylakoid membrane. The protein localises to the cytoplasm. It carries out the reaction ATP + H2O + cellular proteinSide 1 = ADP + phosphate + cellular proteinSide 2.. Functionally, part of the Sec protein translocase complex. Interacts with the SecYEG preprotein conducting channel. Has a central role in coupling the hydrolysis of ATP to the transfer of proteins into and across the cell membrane, serving as an ATP-driven molecular motor driving the stepwise translocation of polypeptide chains across the membrane. Probably participates in protein translocation into and across both the cytoplasmic and thylakoid membranes in cyanobacterial cells. The protein is Protein translocase subunit SecA of Prochlorococcus marinus (strain MIT 9515).